The following is a 93-amino-acid chain: MIRSELIQKIADENPHLTQRHVERIVNTVFEEIIEALARGDRVELRGFGAFSVKARDARVGRNPRTGEAVEVEDKKVPFFKTGKLLRDRLNTK.

Belongs to the bacterial histone-like protein family. Heterodimer of an alpha and a beta chain.

Functionally, this protein is one of the two subunits of integration host factor, a specific DNA-binding protein that functions in genetic recombination as well as in transcriptional and translational control. This is Integration host factor subunit beta from Cereibacter sphaeroides (strain KD131 / KCTC 12085) (Rhodobacter sphaeroides).